The chain runs to 945 residues: Isoleucine--tRNA ligase (945 aa).

Positions 66–76 (PYANGDIHLGH) match the 'HIGH' region motif. Residue Glu-581 coordinates L-isoleucyl-5'-AMP. The 'KMSKS' region signature appears at 622–626 (KMSKS). Position 625 (Lys-625) interacts with ATP. Zn(2+) contacts are provided by Cys-908, Cys-911, Cys-928, and Cys-931.

Belongs to the class-I aminoacyl-tRNA synthetase family. IleS type 1 subfamily. Monomer. Zn(2+) serves as cofactor.

It is found in the cytoplasm. It carries out the reaction tRNA(Ile) + L-isoleucine + ATP = L-isoleucyl-tRNA(Ile) + AMP + diphosphate. Its function is as follows. Catalyzes the attachment of isoleucine to tRNA(Ile). As IleRS can inadvertently accommodate and process structurally similar amino acids such as valine, to avoid such errors it has two additional distinct tRNA(Ile)-dependent editing activities. One activity is designated as 'pretransfer' editing and involves the hydrolysis of activated Val-AMP. The other activity is designated 'posttransfer' editing and involves deacylation of mischarged Val-tRNA(Ile). In Paraburkholderia xenovorans (strain LB400), this protein is Isoleucine--tRNA ligase.